Here is a 317-residue protein sequence, read N- to C-terminus: Putative 2-hydroxyacid dehydrogenase SAB2178 (317 aa).

Residues 155–156 (EI), 234–236 (ASR), and aspartate 260 each bind NAD(+). Residue arginine 236 is part of the active site. Residue glutamate 265 is part of the active site. The active-site Proton donor is histidine 283. NAD(+) is bound at residue 283-286 (HIGN).

The protein belongs to the D-isomer specific 2-hydroxyacid dehydrogenase family.

In Staphylococcus aureus (strain bovine RF122 / ET3-1), this protein is Putative 2-hydroxyacid dehydrogenase SAB2178.